The following is a 321-amino-acid chain: Phospho-N-acetylmuramoyl-pentapeptide-transferase (321 aa).

10 helical membrane-spanning segments follow: residues 1–21, 50–70, 76–96, 112–132, 140–160, 176–196, 200–220, 225–245, 250–270, and 300–320; these read MIFVYALLALVITFVLVPVLI, MGGLTFLLSIVITSLVAIIFV, IILLLFVTIGFGLIGFIDDYI, FLAQIGIAIIFFVLSNVFHLV, IPFTNVAIPLSFAYVIFIVFW, GLATGLSIIGFTMYAIMSFVL, AIGIFCIIMLFALLGFLPYNI, VFMGDTGSLALGGIFATISIM, LSLIFIGLVFVIETLSVMLQV, and VVTVFWAVGLISGLIGLWIGV.

It belongs to the glycosyltransferase 4 family. MraY subfamily. The cofactor is Mg(2+).

The protein localises to the cell membrane. The catalysed reaction is UDP-N-acetyl-alpha-D-muramoyl-L-alanyl-gamma-D-glutamyl-L-lysyl-D-alanyl-D-alanine + di-trans,octa-cis-undecaprenyl phosphate = Mur2Ac(oyl-L-Ala-gamma-D-Glu-L-Lys-D-Ala-D-Ala)-di-trans,octa-cis-undecaprenyl diphosphate + UMP. Its pathway is cell wall biogenesis; peptidoglycan biosynthesis. Catalyzes the initial step of the lipid cycle reactions in the biosynthesis of the cell wall peptidoglycan: transfers peptidoglycan precursor phospho-MurNAc-pentapeptide from UDP-MurNAc-pentapeptide onto the lipid carrier undecaprenyl phosphate, yielding undecaprenyl-pyrophosphoryl-MurNAc-pentapeptide, known as lipid I. This chain is Phospho-N-acetylmuramoyl-pentapeptide-transferase, found in Staphylococcus aureus (strain Mu50 / ATCC 700699).